Consider the following 516-residue polypeptide: uncharacterized protein (516 aa).

PFTB repeat units lie at residues 45–86 (RQDA…QRAD) and 401–443 (DERA…DGSE).

This is an uncharacterized protein from Bradyrhizobium diazoefficiens (strain JCM 10833 / BCRC 13528 / IAM 13628 / NBRC 14792 / USDA 110).